The primary structure comprises 347 residues: MHRRRLALGLGFCLLAGTSLSVLWVYLENWLPVSYVPYYLPCPEIFNMKLHYKREKPLQPVVWSQYPQPKLLEHRPTQLLTLTPWLAPIVSEGTFNPELLQHIYQPLNLTIGVTVFAVGKYTHFIQSFLESAEEFFMRGYRVHYYIFTDNPAAVPGVPLGPHRLLSSIPIQGHSHWEETSMRRMETISQHIAKRAHREVDYLFCLDVDMVFRNPWGPETLGDLVAAIHPSYYAVPRQQFPYERRRVSTAFVADSEGDFYYGGAVFGGQVARVYEFTRGCHMAILADKANGIMAAWREESHLNRHFISNKPSKVLSPEYLWDDRKPQPPSLKLIRFSTLDKDISCLRS.

Topologically, residues 1–5 (MHRRR) are cytoplasmic. Residues 6–26 (LALGLGFCLLAGTSLSVLWVY) traverse the membrane as a helical; Signal-anchor for type II membrane protein segment. Residues 27–347 (LENWLPVSYV…LDKDISCLRS (321 aa)) are Lumenal-facing. An N-linked (GlcNAc...) asparagine glycan is attached at Asn-108. Substrate contacts are provided by residues 116–121 (FAVGKY), 206–208 (DVD), and 228–231 (HPSY). Mn(2+) contacts are provided by Asp-206 and Asp-208. Catalysis depends on Glu-298, which acts as the Nucleophile.

The protein belongs to the glycosyltransferase 6 family. Mn(2+) serves as cofactor. In terms of tissue distribution, widely expressed. Expressed at higher level in placenta, ovary and peripheral blood leukocyte, whereas it is weakly expressed in liver, thymus, and testis. Expressed in bone marrow erythroid cells.

It localises to the golgi apparatus membrane. Its pathway is protein modification; protein glycosylation. Functionally, has lost the ability to synthesize Forssman glycolipid antigen (FORS1/FG). Might have acquired an alternative function in glycosphingolipid metabolism, but it remains to be established. It appears to have drifted more slowly than confirmed pseudogenes in the glycosyltransferase 6 family, suggesting that it has remained under evolutionary pressure. The sequence is that of Globoside alpha-1,3-N-acetylgalactosaminyltransferase 1 from Homo sapiens (Human).